The chain runs to 214 residues: Octanoyltransferase (214 aa).

In terms of domain architecture, BPL/LPL catalytic spans 32 to 207 (EDTLDEIWLV…NLLALLNHPP (176 aa)). Substrate is bound by residues 71–78 (RGGQVTYH), 138–140 (SLG), and 151–153 (GLA). The active-site Acyl-thioester intermediate is the Cys169.

Belongs to the LipB family.

The protein resides in the cytoplasm. It catalyses the reaction octanoyl-[ACP] + L-lysyl-[protein] = N(6)-octanoyl-L-lysyl-[protein] + holo-[ACP] + H(+). Its pathway is protein modification; protein lipoylation via endogenous pathway; protein N(6)-(lipoyl)lysine from octanoyl-[acyl-carrier-protein]: step 1/2. Catalyzes the transfer of endogenously produced octanoic acid from octanoyl-acyl-carrier-protein onto the lipoyl domains of lipoate-dependent enzymes. Lipoyl-ACP can also act as a substrate although octanoyl-ACP is likely to be the physiological substrate. The polypeptide is Octanoyltransferase (Klebsiella pneumoniae (strain 342)).